A 299-amino-acid polypeptide reads, in one-letter code: Serpentine receptor class gamma-30 (299 aa).

7 helical membrane-spanning segments follow: residues 18-38 (GIQF…IKVL), 59-79 (ILSV…NYIP), 98-118 (ILFI…FMVV), 137-157 (IIPH…WTAF), 189-209 (IISS…MLCI), 223-243 (LTAS…MNIY), and 260-280 (ALTA…MLCL).

It belongs to the nematode receptor-like protein srg family.

Its subcellular location is the membrane. This chain is Serpentine receptor class gamma-30 (srg-30), found in Caenorhabditis elegans.